The primary structure comprises 535 residues: Serum response factor-binding protein 1 (535 aa).

2 coiled-coil regions span residues 5–27 (LNLNNEVVKLRKDVKKVKVLIIR) and 107–177 (LKQK…EKCK). 6 stretches are compositionally biased toward basic and acidic residues: residues 128-151 (AAEGEREREKDEPEQVTKIKETKK), 159-191 (KNTEEIKSAKEHVKEEKCKNLLEDSDKGTEKAL), 205-325 (AENK…ERPV), 361-376 (DKEKEYFDDSTEERFY), 406-432 (SDKDGSKQKEEKVPPTKEKAQTSEVQK), and 460-472 (TKRETNFRQERNK). 2 disordered regions span residues 128-435 (AAEG…KEIP) and 453-535 (TKPK…VFDD).

Its subcellular location is the cytoplasm. It is found in the perinuclear region. May be involved in regulating transcriptional activation of cardiac genes during the aging process. May play a role in biosynthesis and/or processing of SLC2A4 in adipose cells. This is Serum response factor-binding protein 1 from Xenopus tropicalis (Western clawed frog).